We begin with the raw amino-acid sequence, 448 residues long: Tubulin beta-1 chain (448 aa).

Residues Gln11, Glu72, Ser141, Gly145, Thr146, Gly147, Asn207, and Asn229 each coordinate GTP. Glu72 contacts Mg(2+). Residues 424–448 are disordered; that stretch reads QQYQDAGMDDDEAEEAYEEEEPVEE. A compositionally biased stretch (acidic residues) spans 430-448; that stretch reads GMDDDEAEEAYEEEEPVEE.

This sequence belongs to the tubulin family. In terms of assembly, dimer of alpha and beta chains. A typical microtubule is a hollow water-filled tube with an outer diameter of 25 nm and an inner diameter of 15 nM. Alpha-beta heterodimers associate head-to-tail to form protofilaments running lengthwise along the microtubule wall with the beta-tubulin subunit facing the microtubule plus end conferring a structural polarity. Microtubules usually have 13 protofilaments but different protofilament numbers can be found in some organisms and specialized cells. The cofactor is Mg(2+).

The protein resides in the cytoplasm. It localises to the cytoskeleton. Tubulin is the major constituent of microtubules, a cylinder consisting of laterally associated linear protofilaments composed of alpha- and beta-tubulin heterodimers. Microtubules grow by the addition of GTP-tubulin dimers to the microtubule end, where a stabilizing cap forms. Below the cap, tubulin dimers are in GDP-bound state, owing to GTPase activity of alpha-tubulin. The protein is Tubulin beta-1 chain (TUB1) of Colletotrichum gloeosporioides (Anthracnose fungus).